The following is a 424-amino-acid chain: Trigger factor (424 aa).

Residues Gly-163 to Pro-248 form the PPIase FKBP-type domain.

This sequence belongs to the FKBP-type PPIase family. Tig subfamily.

Its subcellular location is the cytoplasm. The catalysed reaction is [protein]-peptidylproline (omega=180) = [protein]-peptidylproline (omega=0). Its function is as follows. Involved in protein export. Acts as a chaperone by maintaining the newly synthesized protein in an open conformation. Functions as a peptidyl-prolyl cis-trans isomerase. This chain is Trigger factor, found in Bacillus licheniformis (strain ATCC 14580 / DSM 13 / JCM 2505 / CCUG 7422 / NBRC 12200 / NCIMB 9375 / NCTC 10341 / NRRL NRS-1264 / Gibson 46).